The following is a 159-amino-acid chain: Cytochrome c-type biogenesis protein CcmE (159 aa).

Over M1–R7 the chain is Cytoplasmic. A helical; Signal-anchor for type II membrane protein transmembrane segment spans residues L8 to A28. Topologically, residues L29–S159 are periplasmic. Residues H121 and Y125 each contribute to the heme site. Residues L134–S159 are disordered.

The protein belongs to the CcmE/CycJ family.

The protein resides in the cell inner membrane. Functionally, heme chaperone required for the biogenesis of c-type cytochromes. Transiently binds heme delivered by CcmC and transfers the heme to apo-cytochromes in a process facilitated by CcmF and CcmH. This Xanthobacter autotrophicus (strain ATCC BAA-1158 / Py2) protein is Cytochrome c-type biogenesis protein CcmE.